The following is a 189-amino-acid chain: Elongation factor P (189 aa).

The protein belongs to the elongation factor P family.

It localises to the cytoplasm. It functions in the pathway protein biosynthesis; polypeptide chain elongation. In terms of biological role, involved in peptide bond synthesis. Stimulates efficient translation and peptide-bond synthesis on native or reconstituted 70S ribosomes in vitro. Probably functions indirectly by altering the affinity of the ribosome for aminoacyl-tRNA, thus increasing their reactivity as acceptors for peptidyl transferase. This Onion yellows phytoplasma (strain OY-M) protein is Elongation factor P.